The sequence spans 247 residues: MIKLVLLRHGESQWNRENRFTGWHDIDLTDQGRIEASNAGKLLRAEGFTFDIAYTSVLKRAIRTLWHVLDEMDLMWLPVTKSWRLNERHYGALQGLNKAETAQKYGEEQVLVWRRSYDTPPPALEKSDARYPGSQARYASLSEAEVPLTECLKDTVARFLPLWHETIAPEIRKGRNVIIAAHGNSIRALVKYLDNVSEDDIVGINIPTGIPLVYELDDDLKPIRSYYLGDQDALKKAQEAVAKQGKA.

Substrate is bound by residues 8–15 (RHGESQWN), 21–22 (TG), Arg60, 87–90 (ERHY), Lys98, 114–115 (RR), and 183–184 (GN). His9 (tele-phosphohistidine intermediate) is an active-site residue. The active-site Proton donor/acceptor is Glu87.

The protein belongs to the phosphoglycerate mutase family. BPG-dependent PGAM subfamily.

The enzyme catalyses (2R)-2-phosphoglycerate = (2R)-3-phosphoglycerate. It participates in carbohydrate degradation; glycolysis; pyruvate from D-glyceraldehyde 3-phosphate: step 3/5. Catalyzes the interconversion of 2-phosphoglycerate and 3-phosphoglycerate. This chain is 2,3-bisphosphoglycerate-dependent phosphoglycerate mutase, found in Chlorobium chlorochromatii (strain CaD3).